The sequence spans 870 residues: NEDD4-like E3 ubiquitin-protein ligase WWP2 (870 aa).

One can recognise a C2 domain in the interval 1–117; it reads MASASSSRAG…KNNGGKMENM (117 aa). The disordered stretch occupies residues 151–299; that stretch reads VPNGSALTDG…QQLPAAAQAP (149 aa). 2 stretches are compositionally biased toward polar residues: residues 152-171 and 200-210; these read PNGS…SSGT and SARTTPATGEQ. Ser211 carries the phosphoserine modification. Polar residues-rich tracts occupy residues 222–243 and 263–272; these read VKNS…TTAT and VTPNPNTTSL. Residues 290 to 299 show a composition bias toward low complexity; the sequence is QQLPAAAQAP. WW domains are found at residues 300–333, 330–363, 405–437, and 444–477; these read DALP…RPLP, RPLP…RPTA, GPLP…DPRT, and PALP…DPRP. Positions 536–870 constitute an HECT domain; it reads KPYDLRRRLY…IEETEGFGQE (335 aa). Cys838 acts as the Glycyl thioester intermediate in catalysis.

Interacts with POU5F1, RBP1, EGR2 and SLC11A2. Interacts with SCNN1A, SCNN1B, SCNN1G, WBP1, WBP2 and ATN1. Interacts with ERBB4, NDFIP1 and NDFIP2. Interacts with ARRDC4. Interacts (via WW domains) with ARRDC1 (via PPxY motifs); ubiquitinates ARRDC1. Interacts (via WW domains) with ARRDC2 and ARRDC3. As to quaternary structure, (Microbial infection) Interacts with adenovirus type 2 PIII. In terms of processing, autoubiquitinated. Ubiquitinated by the SCF(FBXL15) complex, leading to its degradation by the proteasome. As to expression, detected in heart, throughout the brain, placenta, lung, liver, muscle, kidney and pancreas. Also detected in spleen and peripheral blood leukocytes.

The protein localises to the nucleus. The enzyme catalyses S-ubiquitinyl-[E2 ubiquitin-conjugating enzyme]-L-cysteine + [acceptor protein]-L-lysine = [E2 ubiquitin-conjugating enzyme]-L-cysteine + N(6)-ubiquitinyl-[acceptor protein]-L-lysine.. Its pathway is protein modification; protein ubiquitination. With respect to regulation, activated by NDFIP1- and NDFIP2-binding. Functionally, E3 ubiquitin-protein ligase which accepts ubiquitin from an E2 ubiquitin-conjugating enzyme in the form of a thioester and then directly transfers the ubiquitin to targeted substrates. Polyubiquitinates POU5F1 by 'Lys-63'-linked conjugation and promotes it to proteasomal degradation; in embryonic stem cells (ESCs) the ubiquitination is proposed to regulate POU5F1 protein level. Ubiquitinates EGR2 and promotes it to proteasomal degradation; in T-cells the ubiquitination inhibits activation-induced cell death. Ubiquitinates SLC11A2; the ubiquitination is enhanced by presence of NDFIP1 and NDFIP2. Ubiquitinates RPB1 and promotes it to proteasomal degradation. The sequence is that of NEDD4-like E3 ubiquitin-protein ligase WWP2 (WWP2) from Homo sapiens (Human).